A 201-amino-acid polypeptide reads, in one-letter code: dTTP/UTP pyrophosphatase (201 aa).

The Proton acceptor role is filled by Asp80.

The protein belongs to the Maf family. YhdE subfamily. A divalent metal cation serves as cofactor.

It localises to the cytoplasm. It catalyses the reaction dTTP + H2O = dTMP + diphosphate + H(+). The catalysed reaction is UTP + H2O = UMP + diphosphate + H(+). Nucleoside triphosphate pyrophosphatase that hydrolyzes dTTP and UTP. May have a dual role in cell division arrest and in preventing the incorporation of modified nucleotides into cellular nucleic acids. The sequence is that of dTTP/UTP pyrophosphatase from Novosphingobium aromaticivorans (strain ATCC 700278 / DSM 12444 / CCUG 56034 / CIP 105152 / NBRC 16084 / F199).